Reading from the N-terminus, the 454-residue chain is Divalent metal cation transporter MntH (454 aa).

Positions 1–21 (MSDAEATAPRSSWRFAGRDED) are disordered. 11 helical membrane-spanning segments follow: residues 45–65 (LFAF…PGNW), 78–98 (TLLF…ALAA), 122–142 (FVLW…EVIG), 153–173 (IPLI…LLLM), 182–202 (AFVI…IFVA), 220–240 (IVTN…TVMP), 275–295 (IALM…AVAF), 312–332 (LLSP…ALLA), 368–388 (GLAI…GTGQ), 389–409 (LLVF…VPLV), and 426–446 (GVAA…FKLL).

Belongs to the NRAMP family.

It is found in the cell inner membrane. Its function is as follows. H(+)-stimulated, divalent metal cation uptake system. The chain is Divalent metal cation transporter MntH from Mesorhizobium japonicum (strain LMG 29417 / CECT 9101 / MAFF 303099) (Mesorhizobium loti (strain MAFF 303099)).